We begin with the raw amino-acid sequence, 662 residues long: Hypoxia-inducible factor 3-alpha (662 aa).

A disordered region spans residues 1-25; the sequence is MDWDQDRSSTELRKEKSRDAARSRR. The region spanning 12–65 is the bHLH domain; that stretch reads LRKEKSRDAARSRRSQETEVLYQLAHTLPFARGVSAHLDKASIMRLTISYLRMH. The interval 75 to 98 is nuclear localization signal; the sequence is QVRKEGEPLDACYLKALEGFVMVL. 2 PAS domains span residues 80–150 and 225–295; these read GEPL…PSLS and PHPA…LSKG. A nuclear export signal region spans residues 228-272; that stretch reads ASLEPPLGRGAFLSRHSLDMKFTYCDERIAEVAGYSPDDLIGCSA. The interval 352 to 379 is disordered; that stretch reads EQTEQHTRRPPQLGTSSKKGIPGNSLDP. An LRRLL motif is present at residues 410-413; that stretch reads LRRL. Disordered regions lie at residues 417–445 and 459–480; these read ILDG…ADLP and STAR…PDTP. The span at 421–433 shows a compositional bias: low complexity; the sequence is PPTAATPSTPQAA. Residues 448–581 form an ODD region; it reads LAVGLENAHR…SEDKGLELLE (134 aa). Residues 450-501 are NTAD; the sequence is VGLENAHRLSTARKNKTMETDLDIAQDPDTPDLEMLAPYISMDDDFQLNSSE. Residue Lys-463 forms a Glycyl lysine isopeptide (Lys-Gly) (interchain with G-Cter in ubiquitin) linkage. A compositionally biased stretch (acidic residues) spans 469-480; the sequence is TDLDIAQDPDTP. The LAPYISMD motif lies at 485-492; that stretch reads LAPYISMD. Pro-487 bears the 4-hydroxyproline mark. The tract at residues 500-595 is disordered; that stretch reads SEQLPKVHRR…KRSPRLEPGS (96 aa). Positions 505–521 are enriched in basic residues; the sequence is KVHRRPPRTARRPRARS. Residue Lys-565 forms a Glycyl lysine isopeptide (Lys-Gly) (interchain with G-Cter in ubiquitin) linkage. A compositionally biased stretch (basic and acidic residues) spans 572 to 584; it reads SEDKGLELLETKP.

In terms of assembly, interacts with ARNT, BAD, BCL2L2, EPAS1, HIF1A, MCL1 and VHL. In terms of processing, in normoxia, hydroxylated on Pro-487 in the oxygen-dependent degradation domain (ODD) by PHD. The hydroxylated proline promotes interaction with VHL, initiating rapid ubiquitination and subsequent proteasomal degradation. Post-translationally, ubiquitinated; ubiquitination occurs in a VHL- and oxygen-dependent pathway and subsequently targeted for proteasomal degradation. As to expression, expressed in the perivenous zone of the liver. Expressed in all tissues examined during normoxia. Expressed in brain and lung. Expressed in periportal and perivenous hepatocytes and in endothelial cells of the central vein (at protein level). Highest expression seen in the cerebral cortex, hippocampus, and lung. Low expression in myocardial tissue and liver.

Its subcellular location is the nucleus. It is found in the cytoplasm. The protein resides in the nucleus speckle. The protein localises to the mitochondrion. Functionally, acts as a transcriptional regulator in adaptive response to low oxygen tension. Attenuates the ability of transcription factor HIF1A, EPAS1 and the HIF1A-ARNT complex to bind to hypoxia-responsive elements (HRE) located within the enhancer/promoter of hypoxia-inducible target genes and hence inhibits HRE-driven transcriptional activation. Functions as an inhibitor of angiogenesis in hypoxic cells of the cornea. Plays a role in the development of the cardiorespiratory system. May also be involved in apoptosis. May act as a tumor suppressor. The chain is Hypoxia-inducible factor 3-alpha from Rattus norvegicus (Rat).